We begin with the raw amino-acid sequence, 393 residues long: uncharacterized protein (393 aa).

Residues C9, C15, C18, and C97 each contribute to the [4Fe-4S] cluster site. Residues Q231, Y258, E279, and D325 each contribute to the S-adenosyl-L-methionine site. C352 acts as the Nucleophile in catalysis.

It belongs to the class I-like SAM-binding methyltransferase superfamily. RNA M5U methyltransferase family.

This is an uncharacterized protein from Leptospira interrogans serogroup Icterohaemorrhagiae serovar Lai (strain 56601).